A 217-amino-acid chain; its full sequence is TPA-induced transmembrane protein (217 aa).

The interval 1–37 (MDLAQPSQPVDELELSVLERQPEENTPLNGADKVFPS) is disordered. The helical transmembrane segment at 66-86 (LWMIITSIFLGVITVIIIGLC) threads the bilayer.

As to quaternary structure, interacts with LIPH. Detected predominantly in the skin, with strongest expression in the inner root sheath of the hair follicle.

It localises to the endoplasmic reticulum. Its subcellular location is the cell membrane. Has a role in LIPH-mediated synthesis of 2-acyl lysophosphatidic acid (LPA). LPA is a bioactive lipid mediator involved in different biological processes, and necessary to promote hair formation and growth. The chain is TPA-induced transmembrane protein (TTMP) from Homo sapiens (Human).